Reading from the N-terminus, the 104-residue chain is Protein METHYLENE BLUE SENSITIVITY 2 (104 aa).

Basic residues predominate over residues methionine 1 to threonine 11. Disordered stretches follow at residues methionine 1–lysine 46 and isoleucine 64–lysine 104. Composition is skewed to basic and acidic residues over residues arginine 36 to lysine 46 and leucine 73 to histidine 82.

The protein resides in the nucleus. It is found in the cytoplasm. Its subcellular location is the stress granule. Functionally, required for acclimation to reactive oxygen species (ROS) responses downstream of beta-cyclocitral, including singlet oxygen 1O(2) detoxification reactions, especially upon light-mediated photooxidative stress, and leading to programmed cell death. Prevents leaf senescence. This Arabidopsis thaliana (Mouse-ear cress) protein is Protein METHYLENE BLUE SENSITIVITY 2.